We begin with the raw amino-acid sequence, 250 residues long: Small ribosomal subunit protein uS2 (250 aa).

This sequence belongs to the universal ribosomal protein uS2 family.

The polypeptide is Small ribosomal subunit protein uS2 (Polaromonas sp. (strain JS666 / ATCC BAA-500)).